Reading from the N-terminus, the 2507-residue chain is Highly reducing polyketide synthase lcsB (2507 aa).

Residues 2–393 (AEPIAVVGMA…GVNAHVIVES (392 aa)) enclose the Ketosynthase family 3 (KS3) domain. Positions 399–501 (NHDRGLSNGS…RNGYSGDDVE (103 aa)) are disordered. Composition is skewed to polar residues over residues 405–414 (SNGSTTSSSP) and 470–488 (NDTP…TSHT). Positions 581-900 (WVFTGQGAQW…DESLLQLAGK (320 aa)) are malonyl-CoA:ACP transacylase (MAT) domain. The segment at 953–1080 (HELLGSRVTE…GEARASVDKA (128 aa)) is N-terminal hotdog fold. The dehydratase (DH) domain stretch occupies residues 953-1232 (HELLGSRVTE…FKASALTRSD (280 aa)). One can recognise a PKS/mFAS DH domain in the interval 953 to 1234 (HELLGSRVTE…ASALTRSDDE (282 aa)). Catalysis depends on H984, which acts as the Proton acceptor; for dehydratase activity. Positions 1092-1234 (ARTVDANEWY…ASALTRSDDE (143 aa)) are C-terminal hotdog fold. D1151 (proton donor; for dehydratase activity) is an active-site residue. Residues 1402 to 1570 (LGHTNPRLRI…EMVAAGFAEP (169 aa)) are methyltransferase (CMet) domain. Positions 1793–2105 (GLLHTMGWSQ…GGRHIGKIIV (313 aa)) are enoyl reductase (ER) (ER) domain. Residues 2130 to 2303 (SYLLVGGLGG…ASVIDIGVMG (174 aa)) are ketoreductase (KR) domain. In terms of domain architecture, Carrier spans 2425 to 2503 (EESTVIIATA…SLGDYIRTAL (79 aa)). An O-(pantetheine 4'-phosphoryl)serine modification is found at S2463.

It participates in secondary metabolite biosynthesis. Its function is as follows. Highly reducing polyketide synthase; part of the gene cluster that mediates the biosynthesis of the lipopeptide antibiotics leucinostatins that show extensive biological activities, including antimalarial, antiviral, antibacterial, antifungal, and antitumor activities, as well as phytotoxic. Leucinostatin A contains nine amino acid residues, including the unusual amino acid 4-methyl-L-proline (MePro), 2-amino-6-hydroxy-4-methyl-8-oxodecanoic acid (AHyMeOA), 3-hydroxyleucine (HyLeu), alpha-aminoisobutyric acid (AIB), beta-Ala, a 4-methylhex-2-enoic acid at the N-terminus as well as a N1,N1-dimethylpropane-1,2-diamine (DPD) at the C-terminus. The biosynthesis of leucinostatins is probably initiated with the assembly of 4-methylhex-2-enoic acid by a reducing PKS. Two reducing polyketide synthases, lcsB and lcsC, have been identified in the cluster and it is not clear which is the one that assembles 4-methylhex-2-enoic acid since both contain KS, AT, DH, cMT, ER, KR and ACP domains. The polyketide residue might be transferred to the NRPS lcsA, mediated by two additional enzymes, the acyl-CoA ligase lcsD and the thioesterase lcsE. The linear polyketide carboxylic acid, which is released from PKS, is converted to a CoA thioester by lcsD, and then lcsE hydrolyzes the thiol bond and shuttles the polyketide intermediate to lcsA. The C domain of the first module catalyzed the condensation of 4-methylhex-2-enoic acid and MePro carried by domain A1, followed by successive condensations of nine amino acids to trigger the elongation of the linear peptide. A5 and A6 domains of lcsA are proposed to incorporate leucine, A2 AHyMeOA, and A3 incorporates HyLeu. A4, A7 and A8 incorporate AIB. The AHyMeOA in leucinostatin A activated by the A2 might be produced by the second PKS (lcsB or lcsC) present within the cluster. The MePro is probably produced via leucine cyclization and may originate from a separate pathway, independent of the cluster. Another nonproteinogenic amino acid, beta-Ala, could be produced by an aspartic acid decarboxylase also localized outside of the cluster. Two candidates are VFPBJ_01400 and VFPBJ_10476. The final peptide scaffold may be released by the NAD(P)H-dependent thioester reductase (TE) at the C-terminal region of lcsA. Transamination of the lcsA product by the transaminase lcsP may produce DPD at the C-terminus. Further hydroxylation steps performed alternatively by the cytochrome P450 monooxygenases lcsI, lcsK andr lcsN then yield the non-methylated leucinostatins precursor. It is also possible that leucines can be hydroxylated prior to their incorporation into the peptide. Varying extents of methylation then lead to the formation of leucinostatins A and B. This chain is Highly reducing polyketide synthase lcsB, found in Purpureocillium lilacinum (Paecilomyces lilacinus).